The primary structure comprises 167 residues: Small ribosomal subunit protein uS5 (167 aa).

An S5 DRBM domain is found at 12 to 75; that stretch reads LQEKLIAVNR…EKARRNMTTI (64 aa).

This sequence belongs to the universal ribosomal protein uS5 family. Part of the 30S ribosomal subunit. Contacts proteins S4 and S8.

In terms of biological role, with S4 and S12 plays an important role in translational accuracy. Functionally, located at the back of the 30S subunit body where it stabilizes the conformation of the head with respect to the body. This is Small ribosomal subunit protein uS5 from Vibrio parahaemolyticus serotype O3:K6 (strain RIMD 2210633).